Here is a 117-residue protein sequence, read N- to C-terminus: Ig heavy chain V-A2 region K-25 (117 aa).

Gln-1 is modified (pyrrolidone carboxylic acid). The region spanning 1–106 is the Ig-like domain; sequence QSVKESEGGL…GLSYLKSSVD (106 aa). Cys-21 and Cys-91 are oxidised to a cystine.

This chain is Ig heavy chain V-A2 region K-25, found in Oryctolagus cuniculus (Rabbit).